The following is a 394-amino-acid chain: Myb-related protein 2 (394 aa).

The region spanning 42-102 is the HTH myb-type domain; it reads TDAKPRLKWT…HLQKYRLSKN (61 aa). A DNA-binding region (H-T-H motif) is located at residues 73–98; that stretch reads PKTIMKVMGIPGLTLYHLKSHLQKYR. The segment at 148–168 is coiled coil; the sequence is GEALQMQIEVQRRLHEQLEVQ. Residues 161–166 carry the LHEQLE motif; sequence LHEQLE. The interval 338–363 is disordered; sequence LHGHKSQHQQGNNEDHKLETRNRKGM. Over residues 350–363 the composition is skewed to basic and acidic residues; sequence NEDHKLETRNRKGM.

The protein belongs to the MYB-CC family. As to quaternary structure, isoform 1: Homodimer. Isoform 3: Does not form homodimer. Expressed in phloem and/or cambium.

Its subcellular location is the nucleus. Its function is as follows. Transcriptional activator that may activate the transcription of specific genes involved in nitrogen uptake or assimilation. Acts redundantly with MYR1 as a repressor of flowering and organ elongation under decreased light intensity. Represses gibberellic acid (GA)-dependent responses and affects levels of bioactive GA. The chain is Myb-related protein 2 from Arabidopsis thaliana (Mouse-ear cress).